We begin with the raw amino-acid sequence, 248 residues long: Small ribosomal subunit protein uS3 (248 aa).

One can recognise a KH type-2 domain in the interval 38–106; it reads VREYLVKTLD…QVALNILEVK (69 aa). Residues 213 to 230 show a composition bias toward basic and acidic residues; that stretch reads ESEINAPAERRGRGDRNG. The interval 213–248 is disordered; that stretch reads ESEINAPAERRGRGDRNGRPRRGGQRRQRSEQKQEG.

This sequence belongs to the universal ribosomal protein uS3 family. As to quaternary structure, part of the 30S ribosomal subunit. Forms a tight complex with proteins S10 and S14.

Binds the lower part of the 30S subunit head. Binds mRNA in the 70S ribosome, positioning it for translation. The polypeptide is Small ribosomal subunit protein uS3 (Corynebacterium diphtheriae (strain ATCC 700971 / NCTC 13129 / Biotype gravis)).